The chain runs to 443 residues: Ribosomal protein uS12 methylthiotransferase RimO (443 aa).

The region spanning 10–120 is the MTTase N-terminal domain; the sequence is PRVGFVSLGC…VVKAVHQHLP (111 aa). Cysteine 19, cysteine 55, cysteine 84, cysteine 151, cysteine 155, and cysteine 158 together coordinate [4Fe-4S] cluster. A Radical SAM core domain is found at 137 to 375; it reads LTPAHYAYLK…DFQEDISTQR (239 aa). In terms of domain architecture, TRAM spans 377–443; the sequence is ERWIGRDITV…VHDLYARPLP (67 aa).

The protein belongs to the methylthiotransferase family. RimO subfamily. It depends on [4Fe-4S] cluster as a cofactor.

It is found in the cytoplasm. The catalysed reaction is L-aspartate(89)-[ribosomal protein uS12]-hydrogen + (sulfur carrier)-SH + AH2 + 2 S-adenosyl-L-methionine = 3-methylsulfanyl-L-aspartate(89)-[ribosomal protein uS12]-hydrogen + (sulfur carrier)-H + 5'-deoxyadenosine + L-methionine + A + S-adenosyl-L-homocysteine + 2 H(+). Its function is as follows. Catalyzes the methylthiolation of an aspartic acid residue of ribosomal protein uS12. The polypeptide is Ribosomal protein uS12 methylthiotransferase RimO (Aromatoleum aromaticum (strain DSM 19018 / LMG 30748 / EbN1) (Azoarcus sp. (strain EbN1))).